Reading from the N-terminus, the 955-residue chain is Leucine-rich repeat-containing G-protein coupled receptor 4 (955 aa).

Positions 1-21 are cleaved as a signal peptide; it reads MGCPGWPLALFALLLASCSGG. Over 22–547 the chain is Extracellular; sequence PSGVSSPAPC…LLGSWMIRLT (526 aa). Residues 26–59 enclose the LRRNT domain; sequence SSPAPCPAPCACDLDGGADCSGKGLVTVPDGLSV. Intrachain disulfides connect Cys-31–Cys-37 and Cys-35–Cys-45. LRR repeat units lie at residues 57-81, 83-105, 106-129, 131-153, 155-177, 178-201, 203-225, 226-249, 250-272, and 274-296; these read LSVF…AFKG, PYLE…ALSG, LKEL…SLKG, VSLQ…SFEG, VQLR…PLSN, LPSL…AFSN, SSLV…CFHG, LDNL…IRSL, PNLK…AFVK, and PLLR…AFQN. A glycan (N-linked (GlcNAc...) asparagine) is linked at Asn-201. N-linked (GlcNAc...) asparagine glycosylation is found at Asn-296 and Asn-316. LRR repeat units follow at residues 320–343, 345–365, 366–389, 390–413, and 415–437; these read TNNL…FCQE, KMLR…GFEG, CSSL…TFQG, LAAL…AFVT, and KALT…GLHG. Residues Cys-341 and Cys-366 are joined by a disulfide bond. A glycan (N-linked (GlcNAc...) asparagine) is linked at Asn-384. Disulfide bonds link Cys-472-Cys-525 and Cys-473-Cys-478. A helical membrane pass occupies residues 548 to 568; sequence VWFIFLLALIFNVIVIVTMFA. At 569–578 the chain is on the cytoplasmic side; sequence SCSQLTSSKL. Residues 579–599 form a helical membrane-spanning segment; the sequence is FIGLIAVSNLFMGVYTGTLTV. At 600–623 the chain is on the extracellular side; it reads LDTISWGQFAEFGIWWETGNGCKV. Residues Cys-621 and Cys-696 are joined by a disulfide bond. Residues 624-644 form a helical membrane-spanning segment; it reads AGFLAIFSSESAIFFLMLAAI. Topologically, residues 645 to 666 are cytoplasmic; that stretch reads ERSLSAKDIIKKEKHQHLRKFQ. Residues 667-687 traverse the membrane as a helical segment; it reads VASLLAVLLAAAAGCLPLFHI. Topologically, residues 688-706 are extracellular; that stretch reads GEFSSSPLCLPFPTGETPS. The helical transmembrane segment at 707-727 threads the bilayer; the sequence is LGFTVTLVLLNSLAFLIMVIT. The Cytoplasmic portion of the chain corresponds to 728-759; the sequence is YTKLYCTIEKEDLSENAESSMIKHVAWLIFTN. Residues 760 to 780 traverse the membrane as a helical segment; it reads CIFFCPVAFFSFAPLITAIYI. Residues 781-786 lie on the Extracellular side of the membrane; sequence SPEIMK. The helical transmembrane segment at 787–807 threads the bilayer; that stretch reads SVTLIFLPLPACLNPVLYVFF. Residues 808–955 are Cytoplasmic-facing; the sequence is NPKFKEDWKL…YAYNIPRMKD (148 aa).

This sequence belongs to the G-protein coupled receptor 1 family.

Its subcellular location is the cell membrane. Receptor for R-spondins that potentiates the canonical Wnt signaling pathway and is involved in the formation of various organs. Upon binding to R-spondins (RSPO1, RSPO2, RSPO3 or RSPO4), associates with phosphorylated LRP6 and frizzled receptors that are activated by extracellular Wnt receptors, triggering the canonical Wnt signaling pathway to increase expression of target genes. In contrast to classical G-protein coupled receptors, does not activate heterotrimeric G-proteins to transduce the signal. Its function as activator of the Wnt signaling pathway is required for the development of various organs, including liver, kidney, intestine, bone, reproductive tract and eye. May play a role in regulating the circadian rhythms of plasma lipids. Required for proper development of GnRH neurons (gonadotropin-releasing hormone expressing neurons) that control the release of reproductive hormones from the pituitary gland. The protein is Leucine-rich repeat-containing G-protein coupled receptor 4 (lgr4) of Xenopus tropicalis (Western clawed frog).